We begin with the raw amino-acid sequence, 607 residues long: Fucose-1-phosphate guanylyltransferase (607 aa).

The segment at 1-21 (MRAVRRGLREGGAMAAARDPP) is disordered.

In terms of tissue distribution, expressed in many tissues.

The protein localises to the cytoplasm. It carries out the reaction beta-L-fucose 1-phosphate + GTP + H(+) = GDP-beta-L-fucose + diphosphate. Functionally, catalyzes the formation of GDP-L-fucose from GTP and L-fucose-1-phosphate. Functions as a salvage pathway to reutilize L-fucose arising from the turnover of glycoproteins and glycolipids. This chain is Fucose-1-phosphate guanylyltransferase, found in Homo sapiens (Human).